A 207-amino-acid polypeptide reads, in one-letter code: ATP synthase subunit b 2 (207 aa).

A helical membrane pass occupies residues 58-78 (LLWLVITFGVFYLLMQKVIAP).

The protein belongs to the ATPase B chain family. As to quaternary structure, F-type ATPases have 2 components, F(1) - the catalytic core - and F(0) - the membrane proton channel. F(1) has five subunits: alpha(3), beta(3), gamma(1), delta(1), epsilon(1). F(0) has three main subunits: a(1), b(2) and c(10-14). The alpha and beta chains form an alternating ring which encloses part of the gamma chain. F(1) is attached to F(0) by a central stalk formed by the gamma and epsilon chains, while a peripheral stalk is formed by the delta and b chains.

The protein resides in the cell inner membrane. F(1)F(0) ATP synthase produces ATP from ADP in the presence of a proton or sodium gradient. F-type ATPases consist of two structural domains, F(1) containing the extramembraneous catalytic core and F(0) containing the membrane proton channel, linked together by a central stalk and a peripheral stalk. During catalysis, ATP synthesis in the catalytic domain of F(1) is coupled via a rotary mechanism of the central stalk subunits to proton translocation. Its function is as follows. Component of the F(0) channel, it forms part of the peripheral stalk, linking F(1) to F(0). The b'-subunit is a diverged and duplicated form of b found in plants and photosynthetic bacteria. In Rhizobium johnstonii (strain DSM 114642 / LMG 32736 / 3841) (Rhizobium leguminosarum bv. viciae), this protein is ATP synthase subunit b 2 (atpF2).